The primary structure comprises 815 residues: MPKHLLIVESPAKAKTINKYLGKDFTVLASYGHVRDLVPKEGAVDPENGFAMRYDLIDKNEKHVEAITKAAKTADSIYLATDPDREGEAISWHISEILKERGLLKDKPMQRIVFTEITPRAIKEAIQKPRMIASDLVDAQQARRALDYLVGFNLSPVLWRKVQRGLSAGRVQSPALRMIVEREEEIEAFITREYWSIHAECTHPAQHFSAKLIKLDGKKFEQFTITDSDTAAAAQRRIQQAAQGRLHITDVTNKERKRRPAPPFITSTLQQEASRKLGFTTRKTMQIAQKLYEGIALGEEGSVGLITYMRTDSVNLSLDALSEIRDIIARDYGTNALPDKPNVYTTKSKNAQEAHEAVRPTSALRTPTQVAPYLSNEEHRLYELVWKRTVASQMIPAILNTTSVDLAAGNEHVFRATGTTVVVQGFLAVYEEGKDNKNAEDDDEGRKLPVMKTGENVPLERILTEQHFTQPPPRYTEAALVKALEEYGIGRPSTYASIIQTLLFRKYVDMEGRSFRPTDIGRAVSKFLSSHFTQYVDYDFTAHLEDELDAISRGEEEWIPLMKKFWVPFKELVEDKKDSLDKTDAGSVRLLGIDPTSGKEVSARIGRFGPMVQIGTVDDEEKPRFASLRPNQSIYSISLEEAIELFKMPRVLGEDQSQQVSVGIGRFGPFAKRGSTYVSLKSEDDPYTIDLARATLLINEKEEIARNRIIKDFENSQIQVLNGRFGPYISDGKLNGKIPKDREPASLTLEEAQQLLINTGKPARKNFSTKKTATKNETRKQTTKKRTTDAKATKKVSDKPVKKQIKKRIAPNITQ.

Residues 3-119 (KHLLIVESPA…QRIVFTEITP (117 aa)) form the Toprim domain. 2 residues coordinate Mg(2+): Glu-9 and Asp-82. The region spanning 133–573 (ASDLVDAQQA…KFWVPFKELV (441 aa)) is the Topo IA-type catalytic domain. Positions 167–172 (SAGRVQ) are interaction with DNA. Tyr-308 acts as the O-(5'-phospho-DNA)-tyrosine intermediate in catalysis. The segment at 759-815 (TGKPARKNFSTKKTATKNETRKQTTKKRTTDAKATKKVSDKPVKKQIKKRIAPNITQ) is disordered. The span at 774–801 (TKNETRKQTTKKRTTDAKATKKVSDKPV) shows a compositional bias: basic and acidic residues.

The protein belongs to the type IA topoisomerase family. As to quaternary structure, monomer. It depends on Mg(2+) as a cofactor.

It carries out the reaction ATP-independent breakage of single-stranded DNA, followed by passage and rejoining.. Releases the supercoiling and torsional tension of DNA, which is introduced during the DNA replication and transcription, by transiently cleaving and rejoining one strand of the DNA duplex. Introduces a single-strand break via transesterification at a target site in duplex DNA. The scissile phosphodiester is attacked by the catalytic tyrosine of the enzyme, resulting in the formation of a DNA-(5'-phosphotyrosyl)-enzyme intermediate and the expulsion of a 3'-OH DNA strand. The free DNA strand then undergoes passage around the unbroken strand, thus removing DNA supercoils. Finally, in the religation step, the DNA 3'-OH attacks the covalent intermediate to expel the active-site tyrosine and restore the DNA phosphodiester backbone. This Xylella fastidiosa (strain Temecula1 / ATCC 700964) protein is DNA topoisomerase 1.